The sequence spans 396 residues: Probable sugar efflux transporter (396 aa).

12 helical membrane-spanning segments follow: residues 15 to 35 (VVTLAIAAFIFNTTEFVPVGL), 50 to 70 (VGIMLTIYAWVVAVMSLPFML), 81 to 101 (LICLFVLFIASHVLSFLAWNF), 103 to 123 (VLVISRIGIAFTHAIFWSITA), 136 to 156 (AQALSLIATGTALAMVLGLPI), 169 to 189 (TFFAIGMGALITLICLIKLLP), 209 to 229 (PALMSLYLLTAVVVTAHYTAY), 246 to 266 (FATVLLLILGGAGIIGSLVFG), 275 to 295 (LLVSIAISLLVVCLLLLLPAA), 301 to 321 (LALLSIFWGIAIMVIGLGMQV), 333 to 353 (VAMALFSGIFNIGIGAGALAG), and 364 to 384 (TIGYIGAVPACAALVWAVLIF).

Belongs to the major facilitator superfamily. SotB (TC 2.A.1.2) family.

It is found in the cell inner membrane. Its function is as follows. Involved in the efflux of sugars. The physiological role may be the reduction of the intracellular concentration of toxic sugars or sugar metabolites. This Salmonella arizonae (strain ATCC BAA-731 / CDC346-86 / RSK2980) protein is Probable sugar efflux transporter.